Consider the following 67-residue polypeptide: Andropin (67 aa).

The N-terminal stretch at 1–19 (MKYFLVLVVLTLILAISVG) is a signal peptide.

It belongs to the andropin family. As to expression, ejaculatory duct of adult males.

It localises to the secreted. Functionally, male-specific peptide with moderate activity against Gram-positive bacteria. The protein is Andropin (Anp) of Drosophila orena (Fruit fly).